A 342-amino-acid polypeptide reads, in one-letter code: Phospho-N-acetylmuramoyl-pentapeptide-transferase (342 aa).

10 helical membrane-spanning segments follow: residues 8-28 (VAQP…VIAP), 58-78 (GIPS…TAIF), 86-106 (IWVI…DDYL), 116-136 (ISLE…LIFL), 152-172 (GLID…VGSS), 184-204 (LATL…HLSL), 213-233 (VVGA…LSFL), 242-262 (VFMG…MSVM), 267-287 (FIYA…MAQV), and 318-338 (IVTR…AAII).

The protein belongs to the glycosyltransferase 4 family. MraY subfamily. Mg(2+) serves as cofactor.

It localises to the cell inner membrane. It carries out the reaction UDP-N-acetyl-alpha-D-muramoyl-L-alanyl-gamma-D-glutamyl-meso-2,6-diaminopimeloyl-D-alanyl-D-alanine + di-trans,octa-cis-undecaprenyl phosphate = di-trans,octa-cis-undecaprenyl diphospho-N-acetyl-alpha-D-muramoyl-L-alanyl-D-glutamyl-meso-2,6-diaminopimeloyl-D-alanyl-D-alanine + UMP. The protein operates within cell wall biogenesis; peptidoglycan biosynthesis. Functionally, catalyzes the initial step of the lipid cycle reactions in the biosynthesis of the cell wall peptidoglycan: transfers peptidoglycan precursor phospho-MurNAc-pentapeptide from UDP-MurNAc-pentapeptide onto the lipid carrier undecaprenyl phosphate, yielding undecaprenyl-pyrophosphoryl-MurNAc-pentapeptide, known as lipid I. The polypeptide is Phospho-N-acetylmuramoyl-pentapeptide-transferase (Anaplasma marginale (strain Florida)).